The sequence spans 593 residues: NADH-quinone oxidoreductase subunit C/D (593 aa).

Residues 1–184 form an NADH dehydrogenase I subunit C region; it reads MTADSALYIP…DPYSLSAAKQ (184 aa). An NADH dehydrogenase I subunit D region spans residues 208–593; it reads DYMFLNLGPN…IDFVMADVDR (386 aa).

This sequence in the N-terminal section; belongs to the complex I 30 kDa subunit family. The protein in the C-terminal section; belongs to the complex I 49 kDa subunit family. As to quaternary structure, NDH-1 is composed of 13 different subunits. Subunits NuoB, CD, E, F, and G constitute the peripheral sector of the complex.

It is found in the cell inner membrane. The enzyme catalyses a quinone + NADH + 5 H(+)(in) = a quinol + NAD(+) + 4 H(+)(out). Its function is as follows. NDH-1 shuttles electrons from NADH, via FMN and iron-sulfur (Fe-S) centers, to quinones in the respiratory chain. The immediate electron acceptor for the enzyme in this species is believed to be ubiquinone. Couples the redox reaction to proton translocation (for every two electrons transferred, four hydrogen ions are translocated across the cytoplasmic membrane), and thus conserves the redox energy in a proton gradient. This is NADH-quinone oxidoreductase subunit C/D from Pseudomonas aeruginosa (strain UCBPP-PA14).